The following is a 513-amino-acid chain: ATP synthase subunit alpha (513 aa).

169 to 176 (GDRQTGKT) serves as a coordination point for ATP.

This sequence belongs to the ATPase alpha/beta chains family. As to quaternary structure, F-type ATPases have 2 components, CF(1) - the catalytic core - and CF(0) - the membrane proton channel. CF(1) has five subunits: alpha(3), beta(3), gamma(1), delta(1), epsilon(1). CF(0) has three main subunits: a(1), b(2) and c(9-12). The alpha and beta chains form an alternating ring which encloses part of the gamma chain. CF(1) is attached to CF(0) by a central stalk formed by the gamma and epsilon chains, while a peripheral stalk is formed by the delta and b chains.

The protein resides in the cell inner membrane. It carries out the reaction ATP + H2O + 4 H(+)(in) = ADP + phosphate + 5 H(+)(out). Functionally, produces ATP from ADP in the presence of a proton gradient across the membrane. The alpha chain is a regulatory subunit. This is ATP synthase subunit alpha from Shewanella sp. (strain MR-4).